The chain runs to 97 residues: Large ribosomal subunit protein bL27 (97 aa).

Positions 1-12 (MLKMTLNNLQLF) are excised as a propeptide. The disordered stretch occupies residues 13–37 (AHKKGGGSTSNGRDSQAKRLGAKAA).

The protein belongs to the bacterial ribosomal protein bL27 family. The N-terminus is cleaved by ribosomal processing cysteine protease Prp.

This Streptococcus pneumoniae serotype 2 (strain D39 / NCTC 7466) protein is Large ribosomal subunit protein bL27.